Here is a 359-residue protein sequence, read N- to C-terminus: Protein RecA (359 aa).

64–71 serves as a coordination point for ATP; that stretch reads GHESSGKT. Residues 329–359 form a disordered region; the sequence is KYSNKDSNDSPKEGSKIKTKVNPAVTQDELI. Basic and acidic residues predominate over residues 331–344; sequence SNKDSNDSPKEGSK.

It belongs to the RecA family.

Its subcellular location is the cytoplasm. Its function is as follows. Can catalyze the hydrolysis of ATP in the presence of single-stranded DNA, the ATP-dependent uptake of single-stranded DNA by duplex DNA, and the ATP-dependent hybridization of homologous single-stranded DNAs. It interacts with LexA causing its activation and leading to its autocatalytic cleavage. The sequence is that of Protein RecA from Francisella tularensis subsp. tularensis (strain FSC 198).